The following is a 142-amino-acid chain: Putative transcriptional regulatory protein Mevan_1098 (142 aa).

It belongs to the Tfx family.

Putative transcriptional regulator. The sequence is that of Putative transcriptional regulatory protein Mevan_1098 from Methanococcus vannielii (strain ATCC 35089 / DSM 1224 / JCM 13029 / OCM 148 / SB).